The sequence spans 237 residues: Demethylmenaquinone methyltransferase (237 aa).

Residues T58, D79, and 106-107 (NA) each bind S-adenosyl-L-methionine.

The protein belongs to the class I-like SAM-binding methyltransferase superfamily. MenG/UbiE family.

It carries out the reaction a 2-demethylmenaquinol + S-adenosyl-L-methionine = a menaquinol + S-adenosyl-L-homocysteine + H(+). The protein operates within quinol/quinone metabolism; menaquinone biosynthesis; menaquinol from 1,4-dihydroxy-2-naphthoate: step 2/2. In terms of biological role, methyltransferase required for the conversion of demethylmenaquinol (DMKH2) to menaquinol (MKH2). This chain is Demethylmenaquinone methyltransferase, found in Listeria monocytogenes serotype 4a (strain HCC23).